Here is an 83-residue protein sequence, read N- to C-terminus: Kappa-ctenitoxin-Pn1a (83 aa).

The first 21 residues, 1–21 (MWFKIQVLVLAITLITLGIQA), serve as a signal peptide directing secretion. Residues 22–37 (EPNSSPNNPLIVEEDR) constitute a propeptide that is removed on maturation. Intrachain disulfides connect Cys40–Cys55, Cys47–Cys60, Cys54–Cys71, and Cys62–Cys69. The propeptide occupies 78–83 (LFGFGK).

It belongs to the neurotoxin 02 (plectoxin) family. Expressed by the venom gland.

Its subcellular location is the secreted. Antagonist of L-type calcium channels (Cav1/CACNA1). In GH3 neuroendocrinal cell line, it reversibly inhibits the A-type potassium current but does not block other potassium currents or calcium channels. Shows an important acetylcholine-mediated antiarrhythmogenic effect in isolated hearts. In vivo, causes paralysis in the posterior limbs and gradual decreases in movement and aggression during 24 hours at dose levels of 5 ug per mouse. In Phoneutria nigriventer (Brazilian armed spider), this protein is Kappa-ctenitoxin-Pn1a.